Consider the following 231-residue polypeptide: Orotidine 5'-phosphate decarboxylase (231 aa).

Substrate is bound by residues Asp-11, Lys-34, 61 to 70, Thr-117, Arg-179, Gln-188, Gly-208, and Arg-209; that span reads DLKLHDIPNT. Catalysis depends on Lys-63, which acts as the Proton donor.

Belongs to the OMP decarboxylase family. Type 1 subfamily. In terms of assembly, homodimer.

The enzyme catalyses orotidine 5'-phosphate + H(+) = UMP + CO2. It functions in the pathway pyrimidine metabolism; UMP biosynthesis via de novo pathway; UMP from orotate: step 2/2. In terms of biological role, catalyzes the decarboxylation of orotidine 5'-monophosphate (OMP) to uridine 5'-monophosphate (UMP). This chain is Orotidine 5'-phosphate decarboxylase, found in Streptococcus suis (strain 98HAH33).